The chain runs to 141 residues: Ly6/PLAUR domain-containing protein 1 (141 aa).

Residues 1–20 (MWVLGIAATFCGLFWLPGLA) form the signal peptide. Intrachain disulfides connect Cys-25-Cys-54, Cys-28-Cys-37, Cys-46-Cys-71, Cys-77-Cys-100, Cys-88-Cys-97, and Cys-101-Cys-106. In terms of domain architecture, UPAR/Ly6 spans 25–108 (CYQCEEFQLN…SCCNTPLCNG (84 aa)). The N-linked (GlcNAc...) asparagine glycan is linked to Asn-45. Gly-115 carries the GPI-anchor amidated glycine lipid modification. Positions 116–141 (SSASAIRPELFTTVLFFNLALCLAHC) are cleaved as a propeptide — removed in mature form.

Interacts with CHRNA4 and nAChRs containing alpha-4:beta-2 (CHRNA4:CHRNB2) and alpha-7 (CHRNA7) subunits.

Its subcellular location is the cell membrane. Believed to act as a modulator of nicotinic acetylcholine receptors (nAChRs) activity. In vitro increases receptor desensitization and decreases affinity for ACh of alpha-4:beta-2-containing nAChRs. May play a role in the intracellular trafficking of alpha-4:beta-2 and alpha-7-containing nAChRs and may inhibit their expression at the cell surface. May be involved in the control of anxiety. The chain is Ly6/PLAUR domain-containing protein 1 (Lypd1) from Rattus norvegicus (Rat).